The sequence spans 270 residues: Thymidylate synthase (270 aa).

DUMP-binding positions include Arg28 and 133–134; that span reads RR. Catalysis depends on Cys153, which acts as the Nucleophile. Residues 173 to 176, Asn184, and 214 to 216 each bind dUMP; these read RSAD and HIY. Residue Asp176 coordinates (6R)-5,10-methylene-5,6,7,8-tetrahydrofolate. Ala269 serves as a coordination point for (6R)-5,10-methylene-5,6,7,8-tetrahydrofolate.

This sequence belongs to the thymidylate synthase family. Bacterial-type ThyA subfamily. In terms of assembly, homodimer.

The protein resides in the cytoplasm. The enzyme catalyses dUMP + (6R)-5,10-methylene-5,6,7,8-tetrahydrofolate = 7,8-dihydrofolate + dTMP. It participates in pyrimidine metabolism; dTTP biosynthesis. Its function is as follows. Catalyzes the reductive methylation of 2'-deoxyuridine-5'-monophosphate (dUMP) to 2'-deoxythymidine-5'-monophosphate (dTMP) while utilizing 5,10-methylenetetrahydrofolate (mTHF) as the methyl donor and reductant in the reaction, yielding dihydrofolate (DHF) as a by-product. This enzymatic reaction provides an intracellular de novo source of dTMP, an essential precursor for DNA biosynthesis. This is Thymidylate synthase from Corynebacterium diphtheriae (strain ATCC 700971 / NCTC 13129 / Biotype gravis).